The primary structure comprises 230 residues: uncharacterized protein (230 aa).

The first 22 residues, M1–G22, serve as a signal peptide directing secretion. The Lumenal segment spans residues A23–L167. A disordered region spans residues S55–S90. The helical transmembrane segment at I168–I188 threads the bilayer. Residues A189–F230 are Cytoplasmic-facing. Residues D208 to F230 are disordered.

The protein localises to the endoplasmic reticulum membrane. This is an uncharacterized protein from Schizosaccharomyces pombe (strain 972 / ATCC 24843) (Fission yeast).